A 147-amino-acid chain; its full sequence is Hemoglobin subunit beta (147 aa).

Valine 2 bears the N-acetylvaline mark. The Globin domain maps to 3–147 (HLSGEEKSAV…VANALAHKYH (145 aa)). Threonine 13 carries the post-translational modification Phosphothreonine. Serine 45 is modified (phosphoserine). Lysine 60 is subject to N6-acetyllysine. Histidine 64 contributes to the heme b binding site. Lysine 83 is modified (N6-acetyllysine). Histidine 93 is a binding site for heme b. At cysteine 94 the chain carries S-nitrosocysteine. Lysine 145 is modified (N6-acetyllysine).

The protein belongs to the globin family. As to quaternary structure, heterotetramer of two alpha chains and two beta chains. In terms of tissue distribution, red blood cells.

Functionally, involved in oxygen transport from the lung to the various peripheral tissues. The protein is Hemoglobin subunit beta (HBB) of Lepus europaeus (European hare).